Reading from the N-terminus, the 501-residue chain is Cytochrome P450 monooxygenase ccsG (501 aa).

The N-terminal stretch at 1-28 (MMITLFTLAVVSIGFFLWWLLTVQPAVT) is a signal peptide. Residues asparagine 115 and asparagine 154 are each glycosylated (N-linked (GlcNAc...) asparagine). Cysteine 443 is a heme binding site.

The protein belongs to the cytochrome P450 family. Heme is required as a cofactor.

It functions in the pathway mycotoxin biosynthesis. Cytochrome P450 monooxygenase; part of the gene cluster that mediates the biosynthesis of a family of the mycotoxins cytochalasins E and K. The hybrid PKS-NRPS synthetase ccsA and the enoyl reductase ccsC are responsible for fusion of phenylalanine with an octaketide backbone and subsequent release of the stable tetramic acid precursor. The polyketide synthase module (PKS) of the PKS-NRPS ccsA is responsible for the synthesis of the octaketide backbone. The downstream nonribosomal peptide synthetase (NRPS) amidates the carboxyl end of the octaketide with a phenylalanine. A reductase-like domain (R) at the C-terminus catalyzes the reductive release of the polyketide-amino acid intermediate. Because ccsA lacks a designated enoylreductase (ER) domain, the required activity is provided the enoyl reductase ccsC. Upon formation of the 11-membered carbocycle-fused perhydroisoindolone intermediate, a number of oxidative steps are required to afford the final cytochalasin E and K, including two hydroxylations at C17 and C18, one alcohol oxidation at C17, one epoxidation at C6 and C7 and two Baeyer-Villiger oxidations. The oxidative modification at C17, C18 and the C6-C7 epoxidation are likely to be catalyzed by the two cytochrome P450 oxygenases ccsD and ccsG. CcsD may be responsible for the epoxidation of the C6-C7 double bond. CcsG may be responsible for the successive oxidative modifications at C17 and C18. The double Baeyer-Villiger oxidations of ketocytochalasin to precytochalasin and cytochalasin Z(16) are among the final steps leading to cytochalasin E and K and are catalyzed by ccsB. The first oxygen insertion step follows that of the classic BVMO mechanism, generating the ester precytochalasin. Release of precytochalasin into an aqueous environment can generate the shunt product iso-precytochalasin through spontaneous isomerization. Alternatively, precytochalasin can undergo further oxidation by ccsB to yield the in-line carbonate-containing cytochalasin Z(16). Cytochalasin Z(16) is a precursor to cytochalasin E and cytochalasin K, whereas iso-precytochalasin is a precursor to cytochalasin Z(17) and rosellichalasin. The hydrolyase ccsE may catalyze hydrolysis of epoxide bond in cytochalasin E to afford cytochalasin K. The function of ccsF has not been assigned but it may play a role in post-PKS-NRPS biosynthetic step, resistance or transport of cytochalasins and related PKS-NRPS products. This chain is Cytochrome P450 monooxygenase ccsG, found in Aspergillus clavatus (strain ATCC 1007 / CBS 513.65 / DSM 816 / NCTC 3887 / NRRL 1 / QM 1276 / 107).